Consider the following 548-residue polypeptide: Chaperonin GroEL (548 aa).

ATP-binding positions include 30–33, K51, 87–91, G415, 479–481, and D495; these read TLGP, DGTTT, and NAA. A disordered region spans residues 524–548; the sequence is LPKEDKSSDSNSSPAGGMGGMGGMM. A compositionally biased stretch (gly residues) spans 539–548; it reads GGMGGMGGMM.

Belongs to the chaperonin (HSP60) family. As to quaternary structure, forms a cylinder of 14 subunits composed of two heptameric rings stacked back-to-back. Interacts with the co-chaperonin GroES.

It is found in the cytoplasm. The enzyme catalyses ATP + H2O + a folded polypeptide = ADP + phosphate + an unfolded polypeptide.. In terms of biological role, together with its co-chaperonin GroES, plays an essential role in assisting protein folding. The GroEL-GroES system forms a nano-cage that allows encapsulation of the non-native substrate proteins and provides a physical environment optimized to promote and accelerate protein folding. The chain is Chaperonin GroEL from Buchnera aphidicola subsp. Myzus persicae (Myzus persicae primary endosymbiont).